Reading from the N-terminus, the 156-residue chain is Small ribosomal subunit protein uS7 (156 aa).

The protein belongs to the universal ribosomal protein uS7 family. Part of the 30S ribosomal subunit. Contacts proteins S9 and S11.

One of the primary rRNA binding proteins, it binds directly to 16S rRNA where it nucleates assembly of the head domain of the 30S subunit. Is located at the subunit interface close to the decoding center, probably blocks exit of the E-site tRNA. The polypeptide is Small ribosomal subunit protein uS7 (Streptococcus equi subsp. equi (strain 4047)).